We begin with the raw amino-acid sequence, 373 residues long: Arfaptin-1 (373 aa).

Residues M1–Q47 are disordered. Position 2 is an N-acetylalanine (A2). S5 carries the post-translational modification Phosphoserine. A compositionally biased stretch (basic and acidic residues) spans D22–H35. Phosphoserine is present on residues S36, S39, S69, S79, and S132. The 201-residue stretch at T153–K353 folds into the AH domain. T361 carries the phosphothreonine modification.

As to quaternary structure, forms homodimers or heterodimers with ARFIP2. Interacts with non-myristoylated GTP-bound ARF3, but not to GDP-bound ARF3. Interacts with ARF1. Binds with lower affinity to ARF5 and with very little affinity to ARF6. Interacts with ARL1. Interacts with ATG9A. Post-translationally, phosphorylated by PRKD1; phosphorylation delocalizes ARFIP1 from the Golgi and disrupts its ability to inhibit the activity of ADP-ribosylation factor, an important component of the vesicle scission machinery.

It is found in the golgi apparatus. The protein resides in the trans-Golgi network membrane. In terms of biological role, plays a role in controlling biogenesis of secretory granules at the trans-Golgi network. Mechanistically, binds ARF-GTP at the neck of a growing secretory granule precursor and forms a protective scaffold. Once the granule precursor has been completely loaded, active PRKD1 phosphorylates ARFIP1 and releases it from ARFs. In turn, ARFs induce fission. Through this mechanism, ensures proper secretory granule formation at the Golgi of pancreatic beta cells. In Mus musculus (Mouse), this protein is Arfaptin-1.